Consider the following 138-residue polypeptide: Small ribosomal subunit protein uS12 (138 aa).

A compositionally biased stretch (polar residues) spans 1-22 (MPTINQLVRQGRKSISTKSDSP). The segment at 1–45 (MPTINQLVRQGRKSISTKSDSPALNFGYNSKKKSLTNNPAPQKRG) is disordered. D102 is modified (3-methylthioaspartic acid).

It belongs to the universal ribosomal protein uS12 family. As to quaternary structure, part of the 30S ribosomal subunit. Contacts proteins S8 and S17. May interact with IF1 in the 30S initiation complex.

Functionally, with S4 and S5 plays an important role in translational accuracy. Its function is as follows. Interacts with and stabilizes bases of the 16S rRNA that are involved in tRNA selection in the A site and with the mRNA backbone. Located at the interface of the 30S and 50S subunits, it traverses the body of the 30S subunit contacting proteins on the other side and probably holding the rRNA structure together. The combined cluster of proteins S8, S12 and S17 appears to hold together the shoulder and platform of the 30S subunit. The sequence is that of Small ribosomal subunit protein uS12 from Lacticaseibacillus paracasei (strain ATCC 334 / BCRC 17002 / CCUG 31169 / CIP 107868 / KCTC 3260 / NRRL B-441) (Lactobacillus paracasei).